The chain runs to 358 residues: Mitogen-activated protein kinase 1 (358 aa).

The residue at position 2 (A2) is an N-acetylalanine. A Protein kinase domain is found at 23–311 (YTNLSYIGEG…VEQALAHPYL (289 aa)). S27 carries the post-translational modification Phosphoserine; by SGK1. Residues 29–37 (IGEGAYGMV) and K52 each bind ATP. D147 functions as the Proton acceptor in the catalytic mechanism. Position 183 is a phosphothreonine; by MAP2K1 and MAP2K2 (T183). The TXY motif lies at 183–185 (TEY). Y185 is subject to Phosphotyrosine; by MAP2K1 and MAP2K2. T188 is modified (phosphothreonine; by autocatalysis). Residues S244, S246, and S282 each carry the phosphoserine modification.

The protein belongs to the protein kinase superfamily. CMGC Ser/Thr protein kinase family. MAP kinase subfamily. As to quaternary structure, binds both upstream activators and downstream substrates in multimolecular complexes. This interaction inhibits its tyrosine-kinase activity. Interacts with ADAM15, ARHGEF2, ARRB2, DAPK1 (via death domain), HSF4, IER3, IPO7, NISCH, SGK1, and isoform 1 of NEK2. Interacts (via phosphorylated form) with TPR (via C-terminal region and phosphorylated form); the interaction requires dimerization of MAPK1/ERK2 and increases following EGF stimulation. Interacts with MAP2K1. Interacts with DUSP6. Interacts (phosphorylated form) with CAV2 ('Tyr-19'-phosphorylated form); the interaction, promoted by insulin, leads to nuclear location and MAPK1 activation. Interacts with DCC. Interacts with MORG1. Interacts with PEA15. Interacts with MKNK2. MKNK2 isoform 1 binding prevents from dephosphorylation and inactivation. The phosphorylated form interacts with PML. Interacts with STYX. Interacts with CDK2AP2. Interacts with CAVIN4. Interacts with DUSP7; the interaction enhances DUSP7 phosphatase activity. Interacts with GIT1; this interaction is necessary for MAPK1 localization to focal adhesions. Interacts with ZNF263. Interacts with phosphoglycerate kinase PGK1; the interaction is direct, occurs under hypoxic conditions, and promotes interaction between PGK1 and PIN1. The cofactor is Mg(2+). Dually phosphorylated on Thr-183 and Tyr-185, which activates the enzyme. Ligand-activated ALK induces tyrosine phosphorylation. Dephosphorylated by PTPRJ at Tyr-185. Phosphorylated upon FLT3 and KIT signaling. Dephosphorylated by DUSP1 and DUSP2 at Thr-183 and Tyr-185. Post-translationally, ISGylated. In terms of processing, ubiquitinated by TRIM15 via 'Lys-63'-linked ubiquitination; leading to activation. Deubiquitinated by CYLD. In terms of tissue distribution, widely expressed.

The protein localises to the cytoplasm. Its subcellular location is the cytoskeleton. It is found in the spindle. It localises to the nucleus. The protein resides in the microtubule organizing center. The protein localises to the centrosome. Its subcellular location is the membrane. It is found in the caveola. It localises to the cell junction. The protein resides in the focal adhesion. It carries out the reaction L-seryl-[protein] + ATP = O-phospho-L-seryl-[protein] + ADP + H(+). The catalysed reaction is L-threonyl-[protein] + ATP = O-phospho-L-threonyl-[protein] + ADP + H(+). Phosphorylated by MAP2K1/MEK1 and MAP2K2/MEK2 on Thr-183 and Tyr-185 in response to external stimuli like insulin or NGF. Both phosphorylations are required for activity. This phosphorylation causes dramatic conformational changes, which enable full activation and interaction of MAPK1/ERK2 with its substrates. Phosphorylation on Ser-27 by SGK1 results in its activation by enhancing its interaction with MAP2K1/MEK1 and MAP2K2/MEK2. Dephosphorylated and inactivated by DUSP1, DUSP3, DUSP6 and DUSP9. Inactivated by pyrimidylpyrrole inhibitors. Serine/threonine kinase which acts as an essential component of the MAP kinase signal transduction pathway. MAPK1/ERK2 and MAPK3/ERK1 are the 2 MAPKs which play an important role in the MAPK/ERK cascade. They participate also in a signaling cascade initiated by activated KIT and KITLG/SCF. Depending on the cellular context, the MAPK/ERK cascade mediates diverse biological functions such as cell growth, adhesion, survival and differentiation through the regulation of transcription, translation, cytoskeletal rearrangements. The MAPK/ERK cascade also plays a role in initiation and regulation of meiosis, mitosis, and postmitotic functions in differentiated cells by phosphorylating a number of transcription factors. About 160 substrates have already been discovered for ERKs. Many of these substrates are localized in the nucleus, and seem to participate in the regulation of transcription upon stimulation. However, other substrates are found in the cytosol as well as in other cellular organelles, and those are responsible for processes such as translation, mitosis and apoptosis. Moreover, the MAPK/ERK cascade is also involved in the regulation of the endosomal dynamics, including lysosome processing and endosome cycling through the perinuclear recycling compartment (PNRC); as well as in the fragmentation of the Golgi apparatus during mitosis. The substrates include transcription factors (such as ATF2, BCL6, ELK1, ERF, FOS, HSF4 or SPZ1), cytoskeletal elements (such as CANX, CTTN, GJA1, MAP2, MAPT, PXN, SORBS3 or STMN1), regulators of apoptosis (such as BAD, BTG2, CASP9, DAPK1, IER3, MCL1 or PPARG), regulators of translation (such as EIF4EBP1 and FXR1) and a variety of other signaling-related molecules (like ARHGEF2, DCC, FRS2 or GRB10). Protein kinases (such as RAF1, RPS6KA1/RSK1, RPS6KA3/RSK2, RPS6KA2/RSK3, RPS6KA6/RSK4, SYK, MKNK1/MNK1, MKNK2/MNK2, RPS6KA5/MSK1, RPS6KA4/MSK2, MAPKAPK3 or MAPKAPK5) and phosphatases (such as DUSP1, DUSP4, DUSP6 or DUSP16) are other substrates which enable the propagation the MAPK/ERK signal to additional cytosolic and nuclear targets, thereby extending the specificity of the cascade. Mediates phosphorylation of TPR in response to EGF stimulation. May play a role in the spindle assembly checkpoint. Phosphorylates PML and promotes its interaction with PIN1, leading to PML degradation. Phosphorylates CDK2AP2. Phosphorylates phosphoglycerate kinase PGK1 under hypoxic conditions to promote its targeting to the mitochondrion and suppress the formation of acetyl-coenzyme A from pyruvate. Functionally, acts as a transcriptional repressor. Binds to a [GC]AAA[GC] consensus sequence. Repress the expression of interferon gamma-induced genes. Seems to bind to the promoter of CCL5, DMP1, IFIH1, IFITM1, IRF7, IRF9, LAMP3, OAS1, OAS2, OAS3 and STAT1. Transcriptional activity is independent of kinase activity. The chain is Mitogen-activated protein kinase 1 from Mus musculus (Mouse).